Reading from the N-terminus, the 134-residue chain is NAD(P)H-quinone oxidoreductase subunit 3 (134 aa).

The next 3 membrane-spanning stretches (helical) occupy residues 20–40 (GYDA…LALV), 78–98 (MFAL…PWAV), and 103–123 (LGLL…VALA).

The protein belongs to the complex I subunit 3 family. In terms of assembly, NDH-1 can be composed of about 15 different subunits; different subcomplexes with different compositions have been identified which probably have different functions.

Its subcellular location is the cellular thylakoid membrane. The enzyme catalyses a plastoquinone + NADH + (n+1) H(+)(in) = a plastoquinol + NAD(+) + n H(+)(out). It carries out the reaction a plastoquinone + NADPH + (n+1) H(+)(in) = a plastoquinol + NADP(+) + n H(+)(out). In terms of biological role, NDH-1 shuttles electrons from an unknown electron donor, via FMN and iron-sulfur (Fe-S) centers, to quinones in the respiratory and/or the photosynthetic chain. The immediate electron acceptor for the enzyme in this species is believed to be plastoquinone. Couples the redox reaction to proton translocation, and thus conserves the redox energy in a proton gradient. Cyanobacterial NDH-1 also plays a role in inorganic carbon-concentration. The polypeptide is NAD(P)H-quinone oxidoreductase subunit 3 (Prochlorococcus marinus (strain MIT 9303)).